The primary structure comprises 633 residues: Glutamyl-tRNA(Gln) amidotransferase subunit E (633 aa).

The protein belongs to the GatB/GatE family. GatE subfamily. In terms of assembly, heterodimer of GatD and GatE.

It carries out the reaction L-glutamyl-tRNA(Gln) + L-glutamine + ATP + H2O = L-glutaminyl-tRNA(Gln) + L-glutamate + ADP + phosphate + H(+). In terms of biological role, allows the formation of correctly charged Gln-tRNA(Gln) through the transamidation of misacylated Glu-tRNA(Gln) in organisms which lack glutaminyl-tRNA synthetase. The reaction takes place in the presence of glutamine and ATP through an activated gamma-phospho-Glu-tRNA(Gln). The GatDE system is specific for glutamate and does not act on aspartate. This chain is Glutamyl-tRNA(Gln) amidotransferase subunit E, found in Methanosarcina barkeri (strain Fusaro / DSM 804).